A 170-amino-acid polypeptide reads, in one-letter code: 3-dehydroquinate dehydratase (170 aa).

Residue Tyr-22 is the Proton acceptor of the active site. Positions 76, 82, and 89 each coordinate substrate. The active-site Proton donor is the His-102. Residues 103–104 and Arg-113 contribute to the substrate site; that span reads LT.

Belongs to the type-II 3-dehydroquinase family. Homododecamer.

The enzyme catalyses 3-dehydroquinate = 3-dehydroshikimate + H2O. It functions in the pathway metabolic intermediate biosynthesis; chorismate biosynthesis; chorismate from D-erythrose 4-phosphate and phosphoenolpyruvate: step 3/7. Functionally, catalyzes a trans-dehydration via an enolate intermediate. The sequence is that of 3-dehydroquinate dehydratase (aroQ) from Helicobacter pylori (strain J99 / ATCC 700824) (Campylobacter pylori J99).